Reading from the N-terminus, the 347-residue chain is Elongation factor Ts (347 aa).

Positions threonine 80 to valine 83 are involved in Mg(2+) ion dislocation from EF-Tu.

This sequence belongs to the EF-Ts family.

It localises to the cytoplasm. In terms of biological role, associates with the EF-Tu.GDP complex and induces the exchange of GDP to GTP. It remains bound to the aminoacyl-tRNA.EF-Tu.GTP complex up to the GTP hydrolysis stage on the ribosome. In Streptococcus gordonii (strain Challis / ATCC 35105 / BCRC 15272 / CH1 / DL1 / V288), this protein is Elongation factor Ts.